The chain runs to 214 residues: Phosphatidylserine decarboxylase proenzyme (214 aa).

Ser-182 acts as the Schiff-base intermediate with substrate; via pyruvic acid in catalysis. Ser-182 is subject to Pyruvic acid (Ser); by autocatalysis.

The protein belongs to the phosphatidylserine decarboxylase family. PSD-A subfamily. In terms of assembly, heterodimer of a large membrane-associated beta subunit and a small pyruvoyl-containing alpha subunit. Pyruvate serves as cofactor. In terms of processing, is synthesized initially as an inactive proenzyme. Formation of the active enzyme involves a self-maturation process in which the active site pyruvoyl group is generated from an internal serine residue via an autocatalytic post-translational modification. Two non-identical subunits are generated from the proenzyme in this reaction, and the pyruvate is formed at the N-terminus of the alpha chain, which is derived from the carboxyl end of the proenzyme. The post-translation cleavage follows an unusual pathway, termed non-hydrolytic serinolysis, in which the side chain hydroxyl group of the serine supplies its oxygen atom to form the C-terminus of the beta chain, while the remainder of the serine residue undergoes an oxidative deamination to produce ammonia and the pyruvoyl prosthetic group on the alpha chain.

The protein localises to the cell membrane. The enzyme catalyses a 1,2-diacyl-sn-glycero-3-phospho-L-serine + H(+) = a 1,2-diacyl-sn-glycero-3-phosphoethanolamine + CO2. Its pathway is phospholipid metabolism; phosphatidylethanolamine biosynthesis; phosphatidylethanolamine from CDP-diacylglycerol: step 2/2. Its function is as follows. Catalyzes the formation of phosphatidylethanolamine (PtdEtn) from phosphatidylserine (PtdSer). The chain is Phosphatidylserine decarboxylase proenzyme from Solidesulfovibrio magneticus (strain ATCC 700980 / DSM 13731 / RS-1) (Desulfovibrio magneticus).